A 193-amino-acid polypeptide reads, in one-letter code: ATP-dependent Clp protease proteolytic subunit 1 (193 aa).

The active-site Nucleophile is Ser98. Residue His123 is part of the active site.

The protein belongs to the peptidase S14 family. In terms of assembly, fourteen ClpP subunits assemble into 2 heptameric rings which stack back to back to give a disk-like structure with a central cavity, resembling the structure of eukaryotic proteasomes.

The protein resides in the cytoplasm. It carries out the reaction Hydrolysis of proteins to small peptides in the presence of ATP and magnesium. alpha-casein is the usual test substrate. In the absence of ATP, only oligopeptides shorter than five residues are hydrolyzed (such as succinyl-Leu-Tyr-|-NHMec, and Leu-Tyr-Leu-|-Tyr-Trp, in which cleavage of the -Tyr-|-Leu- and -Tyr-|-Trp bonds also occurs).. Its function is as follows. Cleaves peptides in various proteins in a process that requires ATP hydrolysis. Has a chymotrypsin-like activity. Plays a major role in the degradation of misfolded proteins. This Bacillus cereus (strain ZK / E33L) protein is ATP-dependent Clp protease proteolytic subunit 1.